The primary structure comprises 367 residues: Beta sliding clamp (367 aa).

It belongs to the beta sliding clamp family. Forms a ring-shaped head-to-tail homodimer around DNA which binds and tethers DNA polymerases and other proteins to the DNA. The DNA replisome complex has a single clamp-loading complex (3 tau and 1 each of delta, delta', psi and chi subunits) which binds 3 Pol III cores (1 core on the leading strand and 2 on the lagging strand) each with a beta sliding clamp dimer. Additional proteins in the replisome are other copies of gamma, psi and chi, Ssb, DNA helicase and RNA primase.

The protein resides in the cytoplasm. Its function is as follows. Confers DNA tethering and processivity to DNA polymerases and other proteins. Acts as a clamp, forming a ring around DNA (a reaction catalyzed by the clamp-loading complex) which diffuses in an ATP-independent manner freely and bidirectionally along dsDNA. Initially characterized for its ability to contact the catalytic subunit of DNA polymerase III (Pol III), a complex, multichain enzyme responsible for most of the replicative synthesis in bacteria; Pol III exhibits 3'-5' exonuclease proofreading activity. The beta chain is required for initiation of replication as well as for processivity of DNA replication. The sequence is that of Beta sliding clamp (dnaN) from Pseudomonas aeruginosa (strain ATCC 15692 / DSM 22644 / CIP 104116 / JCM 14847 / LMG 12228 / 1C / PRS 101 / PAO1).